The chain runs to 327 residues: Cell surface glycoprotein CD200 receptor 1 (327 aa).

Positions 1 to 23 are cleaved as a signal peptide; the sequence is MLCFWRTSHVAVLLIWGVFAAES. Over 24 to 239 the chain is Extracellular; it reads SCPDKNQTMQ…GRGGDQLLGS (216 aa). Residues 26-145 enclose the Ig-like V-type domain; that stretch reads PDKNQTMQNN…GNFQNIYDLQ (120 aa). N-linked (GlcNAc...) asparagine glycosylation is found at Asn-29, Asn-34, Asn-43, Asn-96, Asn-159, Asn-187, Asn-192, and Asn-222. 2 disulfides stabilise this stretch: Cys-58–Cys-129 and Cys-81–Cys-97. An Ig-like C2-type domain is found at 147 to 226; the sequence is LVPPEVTHFP…HLTTGNQSLS (80 aa). Intrachain disulfides connect Cys-164–Cys-213 and Cys-183–Cys-201. The chain crosses the membrane as a helical span at residues 240–260; sequence YIQYIIPSIIILIIIGCICLL. The Cytoplasmic segment spans residues 261–327; that stretch reads KISGCRKCKL…DCLTLSAMGI (67 aa).

Belongs to the CD200R family. As to quaternary structure, CD200 and CD200R1 interact via their respective N-terminal Ig-like domains. Post-translationally, phosphorylated on tyrosine residues. Highly N-glycosylated. As to expression, restricted to cells of the myeloid lineage.

Its subcellular location is the cell membrane. In terms of biological role, inhibitory receptor for the CD200/OX2 cell surface glycoprotein. Limits inflammation by inhibiting the expression of pro-inflammatory molecules including TNF-alpha, interferons, and inducible nitric oxide synthase (iNOS) in response to selected stimuli. This is Cell surface glycoprotein CD200 receptor 1 (Cd200r1) from Rattus norvegicus (Rat).